The following is a 212-amino-acid chain: MSVTLHTTHGDLKVELFCEAVPQTAENFLALCACGAYNNTPFHRIFPGFMIQGGDISLGPAPGTLNTLKPMLPVNEIPKGGTSIYHPRALNQEIHLPALRHNARGILSMASRPVKDRTAPGSQGATGATVNGSQFFITFAAAPHLDGASTVFGKVLNLSPQDEGGDVLSKLEKAKLKVDKKGRVTQPKEGEEGGYEAIGINSVTIHANPFAK.

Residues 1-198 (MSVTLHTTHG…EGEEGGYEAI (198 aa)) enclose the PPIase cyclophilin-type domain.

Belongs to the cyclophilin-type PPIase family. PPIL3 subfamily.

It carries out the reaction [protein]-peptidylproline (omega=180) = [protein]-peptidylproline (omega=0). In terms of biological role, PPIases accelerate the folding of proteins. It catalyzes the cis-trans isomerization of proline imidic peptide bonds in oligopeptides. This Aspergillus fumigatus (strain ATCC MYA-4609 / CBS 101355 / FGSC A1100 / Af293) (Neosartorya fumigata) protein is Peptidyl-prolyl cis-trans isomerase-like 3 (cyp10).